The sequence spans 277 residues: Phosphatidylglycerol--prolipoprotein diacylglyceryl transferase (277 aa).

The next 4 membrane-spanning stretches (helical) occupy residues 11 to 31 (IIFS…LISF), 55 to 75 (LLYI…IIFY), 93 to 113 (GGMS…YLSL), and 117 to 137 (VKIL…LGAG). Arg138 serves as a coordination point for a 1,2-diacyl-sn-glycero-3-phospho-(1'-sn-glycerol). The next 3 membrane-spanning stretches (helical) occupy residues 192–212 (PSQL…IYFF), 220–240 (GSIS…SEFF), and 256–276 (MGQI…NLFI).

It belongs to the Lgt family.

The protein localises to the cell inner membrane. The enzyme catalyses L-cysteinyl-[prolipoprotein] + a 1,2-diacyl-sn-glycero-3-phospho-(1'-sn-glycerol) = an S-1,2-diacyl-sn-glyceryl-L-cysteinyl-[prolipoprotein] + sn-glycerol 1-phosphate + H(+). It participates in protein modification; lipoprotein biosynthesis (diacylglyceryl transfer). Its function is as follows. Catalyzes the transfer of the diacylglyceryl group from phosphatidylglycerol to the sulfhydryl group of the N-terminal cysteine of a prolipoprotein, the first step in the formation of mature lipoproteins. The sequence is that of Phosphatidylglycerol--prolipoprotein diacylglyceryl transferase from Buchnera aphidicola subsp. Schizaphis graminum (strain Sg).